Here is a 116-residue protein sequence, read N- to C-terminus: Holo-[acyl-carrier-protein] synthase (116 aa).

Residues aspartate 8 and glutamate 59 each coordinate Mg(2+).

It belongs to the P-Pant transferase superfamily. AcpS family. It depends on Mg(2+) as a cofactor.

The protein localises to the cytoplasm. It catalyses the reaction apo-[ACP] + CoA = holo-[ACP] + adenosine 3',5'-bisphosphate + H(+). Its function is as follows. Transfers the 4'-phosphopantetheine moiety from coenzyme A to a Ser of acyl-carrier-protein. This chain is Holo-[acyl-carrier-protein] synthase, found in Staphylococcus saprophyticus subsp. saprophyticus (strain ATCC 15305 / DSM 20229 / NCIMB 8711 / NCTC 7292 / S-41).